Here is a 162-residue protein sequence, read N- to C-terminus: Beta-lactoglobulin-1 (162 aa).

Intrachain disulfides connect Cys66–Cys160 and Cys106–Cys119.

It belongs to the calycin superfamily. Lipocalin family. In terms of assembly, monomer.

Its subcellular location is the secreted. Functionally, lactoglobulin is the primary component of whey, it binds retinol and is probably involved in the transport of that molecule. The chain is Beta-lactoglobulin-1 (LGB1) from Felis catus (Cat).